Consider the following 414-residue polypeptide: Histidinol dehydrogenase (414 aa).

Tyrosine 116, glutamine 177, and asparagine 200 together coordinate NAD(+). Threonine 223, glutamine 245, and histidine 248 together coordinate substrate. Zn(2+)-binding residues include glutamine 245 and histidine 248. Active-site proton acceptor residues include glutamate 313 and histidine 314. Substrate contacts are provided by histidine 314, aspartate 347, glutamate 401, and histidine 406. Residue aspartate 347 coordinates Zn(2+). A Zn(2+)-binding site is contributed by histidine 406.

Belongs to the histidinol dehydrogenase family. It depends on Zn(2+) as a cofactor.

The enzyme catalyses L-histidinol + 2 NAD(+) + H2O = L-histidine + 2 NADH + 3 H(+). It participates in amino-acid biosynthesis; L-histidine biosynthesis; L-histidine from 5-phospho-alpha-D-ribose 1-diphosphate: step 9/9. In terms of biological role, catalyzes the sequential NAD-dependent oxidations of L-histidinol to L-histidinaldehyde and then to L-histidine. This chain is Histidinol dehydrogenase, found in Staphylococcus epidermidis (strain ATCC 35984 / DSM 28319 / BCRC 17069 / CCUG 31568 / BM 3577 / RP62A).